Reading from the N-terminus, the 213-residue chain is Cytochrome b-c1 complex subunit Rieske, mitochondrial (213 aa).

Residues 1–29 (MSSLAFRTLRNGLGLKSSVRALSTTTTTL) constitute a mitochondrion transit peptide. At 30–47 (SNYQQPDYSSYLNNKSGQ) the chain is on the mitochondrial matrix side. A helical transmembrane segment spans residues 48 to 77 (GSRNFTYFMVGSMGLLSAAGAKSTVEAFLS). At 78–213 (SFAASADVLA…FTDDETLLVG (136 aa)) the chain is on the mitochondrial intermembrane side. The Rieske domain occupies 116–211 (RHRTADEIEE…YDFTDDETLL (96 aa)). Cys156, His158, Cys175, and His178 together coordinate [2Fe-2S] cluster. Cysteines 161 and 177 form a disulfide.

It belongs to the Rieske iron-sulfur protein family. Component of the ubiquinol-cytochrome c oxidoreductase (cytochrome b-c1 complex, complex III, CIII), a multisubunit enzyme composed of 10 subunits. The complex is composed of 3 respiratory subunits cytochrome b (COB), cytochrome c1 (CYT1) and Rieske protein (RIP1), 2 core protein subunits COR1 and QCR2, and 5 low-molecular weight protein subunits QCR6, QCR7, QCR8, QCR9 and QCR10. The complex exists as an obligatory dimer and forms supercomplexes (SCs) in the inner mitochondrial membrane with a monomer or a dimer of cytochrome c oxidase (complex IV, CIV), resulting in 2 different assemblies (supercomplexes III(2)IV and III(2)IV(2)). [2Fe-2S] cluster is required as a cofactor.

The protein resides in the mitochondrion inner membrane. The enzyme catalyses a quinol + 2 Fe(III)-[cytochrome c](out) = a quinone + 2 Fe(II)-[cytochrome c](out) + 2 H(+)(out). Functionally, component of the ubiquinol-cytochrome c oxidoreductase, a multisubunit transmembrane complex that is part of the mitochondrial electron transport chain which drives oxidative phosphorylation. The complex plays an important role in the uptake of multiple carbon sources present in different host niches. In Candida albicans (strain SC5314 / ATCC MYA-2876) (Yeast), this protein is Cytochrome b-c1 complex subunit Rieske, mitochondrial.